The following is a 272-amino-acid chain: 4-hydroxy-tetrahydrodipicolinate reductase (272 aa).

12–17 provides a ligand contact to NAD(+); sequence GALGKM. Lys39 lines the NADP(+) pocket. NAD(+) contacts are provided by residues 102 to 104 and 126 to 129; these read GTT and SSNY. Catalysis depends on His159, which acts as the Proton donor/acceptor. His160 is a binding site for (S)-2,3,4,5-tetrahydrodipicolinate. Lys163 acts as the Proton donor in catalysis. 169-170 contributes to the (S)-2,3,4,5-tetrahydrodipicolinate binding site; the sequence is GT.

Belongs to the DapB family. In terms of assembly, homotetramer.

The protein resides in the cytoplasm. The catalysed reaction is (S)-2,3,4,5-tetrahydrodipicolinate + NAD(+) + H2O = (2S,4S)-4-hydroxy-2,3,4,5-tetrahydrodipicolinate + NADH + H(+). It carries out the reaction (S)-2,3,4,5-tetrahydrodipicolinate + NADP(+) + H2O = (2S,4S)-4-hydroxy-2,3,4,5-tetrahydrodipicolinate + NADPH + H(+). It participates in amino-acid biosynthesis; L-lysine biosynthesis via DAP pathway; (S)-tetrahydrodipicolinate from L-aspartate: step 4/4. Its function is as follows. Catalyzes the conversion of 4-hydroxy-tetrahydrodipicolinate (HTPA) to tetrahydrodipicolinate. The protein is 4-hydroxy-tetrahydrodipicolinate reductase of Buchnera aphidicola subsp. Baizongia pistaciae (strain Bp).